Consider the following 272-residue polypeptide: Probable ribosomal RNA small subunit methyltransferase A (272 aa).

The S-adenosyl-L-methionine site is built by asparagine 23, leucine 25, glycine 50, glutamate 71, aspartate 95, and asparagine 110.

It belongs to the class I-like SAM-binding methyltransferase superfamily. rRNA adenine N(6)-methyltransferase family. RsmA subfamily.

It localises to the cytoplasm. Specifically dimethylates two adjacent adenosines in the loop of a conserved hairpin near the 3'-end of 16S rRNA in the 30S particle. May play a critical role in biogenesis of 30S subunits. The sequence is that of Probable ribosomal RNA small subunit methyltransferase A from Thermococcus onnurineus (strain NA1).